The chain runs to 542 residues: Neutral amino acid transporter B(0) (542 aa).

Met1 carries the N-acetylmethionine modification. The Cytoplasmic portion of the chain corresponds to 1–52 (MVADPPRGDSKGLAAAEPTANGGLALASIEDQGEAAGGCCGSRDRVRRCLRA). Residues 53–82 (NLLVLLTVVAVVVGVALGLGVSGAGGALAL) form a helical membrane-spanning segment. Over 83–95 (GPERLSAFVFPGE) the chain is Extracellular. The chain crosses the membrane as a helical span at residues 96–117 (LLLRLLRMIILPLVVCSLIGGA). The Cytoplasmic segment spans residues 118-131 (ASLDPGALGRLGAW). The chain crosses the membrane as a helical span at residues 132-154 (ALLFFLVTTLLASALGVALALAL). Over 155 to 225 (QPGAASAAIN…GTRVKVPVGQ (71 aa)) the chain is Extracellular. Residues Asn164 and Asn213 are each glycosylated (N-linked (GlcNAc...) asparagine). Residues 226-249 (EVEGMNILGLVVFAIVFGVALRKL) form a helical membrane-spanning segment. Topologically, residues 250–258 (GPEGELLIR) are cytoplasmic. A helical membrane pass occupies residues 259–286 (FFNSFNEATMVLVSWIMWYAPVGIMFLV). Over 287–307 (AGKIVEMEDVGLLFARLGKYI) the chain is Extracellular. The chain crosses the membrane as a helical span at residues 308–329 (LCCLLGHAIHGLLVLPLIYFLF). Residues 330-334 (TRKNP) are Cytoplasmic-facing. Positions 335–365 (YRFLWGIVTPLATAFGTSSSSATLPLMMKCV) form an intramembrane region, discontinuously helical. At 366–374 (EENNGVAKH) the chain is on the cytoplasmic side. Residues 375–401 (ISRFILPIGATVNMDGAALFQCVAAVF) form a helical membrane-spanning segment. Na(+) is bound by residues Gly383, Thr385, and Asn387. Topologically, residues 402 to 414 (IAQLSEQSLDFVK) are extracellular. Residues 415-448 (IITILVTATASSVGAAGIPAGGVLTLAIILEAVN) constitute an intramembrane region (discontinuously helical). Over 449 to 461 (LPVDHISLILAVD) the chain is Extracellular. The chain crosses the membrane as a helical span at residues 462–483 (WLVDRSCTVLNVEGDALGAGLL). Residues Asn472 and Asp476 each contribute to the Na(+) site. The Cytoplasmic segment spans residues 484–542 (QNYVDRTEVRSTEPELIQVKSELPLDPLPAPTEEGNPLLRHYRGPAGDATVASEKESVM). Ser494 bears the Phosphoserine mark. A Phosphothreonine modification is found at Thr495. A phosphoserine mark is found at Ser504, Ser536, and Ser540. The disordered stretch occupies residues 509–542 (DPLPAPTEEGNPLLRHYRGPAGDATVASEKESVM).

The protein belongs to the dicarboxylate/amino acid:cation symporter (DAACS) (TC 2.A.23) family. SLC1A5 subfamily. Homotrimer.

It is found in the cell membrane. The protein localises to the melanosome. It carries out the reaction L-glutamine(out) + L-serine(in) + Na(+)(out) = L-glutamine(in) + L-serine(out) + Na(+)(in). It catalyses the reaction L-glutamine(in) + L-serine(out) + Na(+)(out) = L-glutamine(out) + L-serine(in) + Na(+)(in). The catalysed reaction is L-threonine(in) + L-glutamine(out) + Na(+)(out) = L-threonine(out) + L-glutamine(in) + Na(+)(in). The enzyme catalyses L-threonine(out) + L-glutamine(in) + Na(+)(out) = L-threonine(in) + L-glutamine(out) + Na(+)(in). It carries out the reaction L-asparagine(in) + L-glutamine(out) + Na(+)(out) = L-asparagine(out) + L-glutamine(in) + Na(+)(in). It catalyses the reaction L-asparagine(out) + L-glutamine(in) + Na(+)(out) = L-asparagine(in) + L-glutamine(out) + Na(+)(in). The catalysed reaction is L-glutamine(in) + L-alanine(out) + Na(+)(out) = L-glutamine(out) + L-alanine(in) + Na(+)(in). The enzyme catalyses L-valine(out) + L-glutamine(in) + Na(+)(out) = L-valine(in) + L-glutamine(out) + Na(+)(in). It carries out the reaction L-glutamine(in) + L-methionine(out) + Na(+)(out) = L-glutamine(out) + L-methionine(in) + Na(+)(in). It catalyses the reaction L-glutamine(in) + L-glutamate(out) + Na(+)(out) + H(+)(out) = L-glutamine(out) + L-glutamate(in) + Na(+)(in) + H(+)(in). The catalysed reaction is D-serine(in) + L-glutamine(out) + Na(+)(out) = D-serine(out) + L-glutamine(in) + Na(+)(in). The enzyme catalyses D-serine(in) + L-alanine(out) + Na(+)(out) = D-serine(out) + L-alanine(in) + Na(+)(in). It carries out the reaction nitrate(in) = nitrate(out). It catalyses the reaction iodide(out) = iodide(in). The catalysed reaction is thiocyanate(in) = thiocyanate(out). Its function is as follows. Sodium-coupled antiporter of neutral amino acids. In a tri-substrate transport cycle, exchanges neutral amino acids between the extracellular and intracellular compartments, coupled to the inward cotransport of at least one sodium ion. The preferred substrate is the essential amino acid L-glutamine, a precursor for biosynthesis of proteins, nucleotides and amine sugars as well as an alternative fuel for mitochondrial oxidative phosphorylation. Exchanges L-glutamine with other neutral amino acids such as L-serine, L-threonine and L-asparagine in a bidirectional way. Provides L-glutamine to proliferating stem and activated cells driving the metabolic switch toward cell differentiation. The transport cycle is usually pH-independent, with the exception of L-glutamate. Transports extracellular L-glutamate coupled to the cotransport of one proton and one sodium ion in exchange for intracellular L-glutamine counter-ion. May provide for L-glutamate uptake in glial cells regulating glutamine/glutamate cycle in the nervous system. Can transport D-amino acids. Mediates D-serine release from the retinal glia potentially affecting NMDA receptor function in retinal neurons. Displays sodium- and amino acid-dependent but uncoupled channel-like anion conductance with a preference SCN(-) &gt;&gt; NO3(-) &gt; I(-) &gt; Cl(-). Through binding of the fusogenic protein syncytin-1/ERVW-1 may mediate trophoblasts syncytialization, the spontaneous fusion of their plasma membranes, an essential process in placental development. The sequence is that of Neutral amino acid transporter B(0) (SLC1A5) from Macaca fascicularis (Crab-eating macaque).